A 258-amino-acid chain; its full sequence is UPF0246 protein Asuc_0575 (258 aa).

The protein belongs to the UPF0246 family.

In Actinobacillus succinogenes (strain ATCC 55618 / DSM 22257 / CCUG 43843 / 130Z), this protein is UPF0246 protein Asuc_0575.